A 190-amino-acid chain; its full sequence is Major sperm protein 32 (190 aa).

The 118-residue stretch at 72-189 (MIQTQPGTKI…RRKNLPIEYN (118 aa)) folds into the MSP domain.

In terms of tissue distribution, sperm.

It localises to the cell projection. The protein localises to the pseudopodium. The protein resides in the cytoplasm. It is found in the cytoskeleton. Central component in molecular interactions underlying sperm crawling. Forms an extensive filament system that extends from sperm villipoda, along the leading edge of the pseudopod. In Caenorhabditis elegans, this protein is Major sperm protein 32 (msp-32).